The primary structure comprises 619 residues: Mitogen-activated protein kinase kinase kinase 2 (619 aa).

Disordered regions lie at residues 25-44 (LSLQ…QNDV), 126-168 (QATN…PPPG), 201-245 (LDPL…DNHQ), and 289-355 (RTQG…APTN). S26 carries the phosphoserine modification. Positions 43–122 (DVRVKFEHRG…KSLKILLVVN (80 aa)) constitute a PB1 domain. Positions 126–143 (QATNLEPSPSPEDLNNTP) are enriched in polar residues. S153 and S164 each carry phosphoserine. Residues 203–219 (PLSLSSPENSGSGSCPS) are compositionally biased toward low complexity. Residues S239, S297, S311, S331, S344, and S349 each carry the phosphoserine modification. Over residues 290–299 (TQGTSFRSPV) the composition is skewed to polar residues. The span at 300–315 (SFSPTDHSLSTSSGSS) shows a compositional bias: low complexity. Over residues 322 to 332 (DDSRIRRRGSD) the composition is skewed to basic and acidic residues. The span at 336-346 (PTLTVTDISPP) shows a compositional bias: polar residues. One can recognise a Protein kinase domain in the interval 356–616 (WRLGKLLGQG…AEELLRHMFV (261 aa)). ATP is bound by residues 362 to 370 (LGQGAFGRV) and K385. D483 (proton acceptor) is an active-site residue.

The protein belongs to the protein kinase superfamily. STE Ser/Thr protein kinase family. MAP kinase kinase kinase subfamily. As to quaternary structure, self-associates. Binds both upstream activators and downstream substrates in multimolecular complexes. Interacts (via the kinase catalytic domain) with STK38. Interacts with XIAP/BIRC4. Mg(2+) serves as cofactor. In terms of processing, ubiquitination by XIAP/BIRC4 does not lead to proteasomal degradation. Post-translationally, autophosphorylated.

It localises to the cytoplasm. The protein resides in the nucleus. The catalysed reaction is L-seryl-[protein] + ATP = O-phospho-L-seryl-[protein] + ADP + H(+). It carries out the reaction L-threonyl-[protein] + ATP = O-phospho-L-threonyl-[protein] + ADP + H(+). With respect to regulation, activated by phosphorylation on Thr-524. Interacts with PKN2; the interaction activates PKN2 kinase activity in a MAP3K2-independent kinase activity. Component of a protein kinase signal transduction cascade. Regulates the JNK and ERK5 pathways by phosphorylating and activating MAP2K5 and MAP2K7. Plays a role in caveolae kiss-and-run dynamics. The protein is Mitogen-activated protein kinase kinase kinase 2 (Map3k2) of Mus musculus (Mouse).